Here is a 640-residue protein sequence, read N- to C-terminus: UvrABC system protein C (640 aa).

In terms of domain architecture, GIY-YIG spans 22–101 (NDPGCYLMKD…IKSHQPYFNV (80 aa)). One can recognise a UVR domain in the interval 211–246 (DELRILLEKQMISFSESLKFEEAGSVRDQLKGIDRL).

It belongs to the UvrC family. Interacts with UvrB in an incision complex.

The protein localises to the cytoplasm. The UvrABC repair system catalyzes the recognition and processing of DNA lesions. UvrC both incises the 5' and 3' sides of the lesion. The N-terminal half is responsible for the 3' incision and the C-terminal half is responsible for the 5' incision. The protein is UvrABC system protein C of Prochlorococcus marinus (strain NATL1A).